We begin with the raw amino-acid sequence, 46 residues long: Endochitinase 3 (46 aa).

Residues 1–21 (MTPQGNKPSSHDVITGRWTPS) are disordered.

This sequence belongs to the glycosyl hydrolase 19 family. Chitinase class I subfamily.

It catalyses the reaction Random endo-hydrolysis of N-acetyl-beta-D-glucosaminide (1-&gt;4)-beta-linkages in chitin and chitodextrins.. Functionally, defense against chitin-containing fungal and bacterial pathogens. In Arachis hypogaea (Peanut), this protein is Endochitinase 3.